Reading from the N-terminus, the 289-residue chain is MIRIAIPNKGRLYEPTISIFKDAGLPISGGAESRKLFAKTTDPDIHILFARAADIPEYVQDGAADVGITGMDLITERGANVEALLDLKFGRANLVLAVPEDSDFEKAQDLEGKKVATEFPEITRRYFEKLGVNVNVIKVSGACEMTPHVGIADAIVDISSSGTTLLINHLKAIDMAFSSTVYLIANKESLRTKEKILDIKTAFESVLNAKKKRYLMMNVPESSLKAVKEVLPGMSGPTVMKVESSKFSEESILAVHAVVDADLIFTIVNRLKKVGARDVLVVPIERIMP.

It belongs to the ATP phosphoribosyltransferase family. Long subfamily. It depends on Mg(2+) as a cofactor.

The protein localises to the cytoplasm. It carries out the reaction 1-(5-phospho-beta-D-ribosyl)-ATP + diphosphate = 5-phospho-alpha-D-ribose 1-diphosphate + ATP. The protein operates within amino-acid biosynthesis; L-histidine biosynthesis; L-histidine from 5-phospho-alpha-D-ribose 1-diphosphate: step 1/9. With respect to regulation, feedback inhibited by histidine. Catalyzes the condensation of ATP and 5-phosphoribose 1-diphosphate to form N'-(5'-phosphoribosyl)-ATP (PR-ATP). Has a crucial role in the pathway because the rate of histidine biosynthesis seems to be controlled primarily by regulation of HisG enzymatic activity. This is ATP phosphoribosyltransferase from Methanosarcina mazei (strain ATCC BAA-159 / DSM 3647 / Goe1 / Go1 / JCM 11833 / OCM 88) (Methanosarcina frisia).